A 326-amino-acid polypeptide reads, in one-letter code: Small ribosomal subunit protein RACK1x (326 aa).

WD repeat units lie at residues 13–53 (AHTD…KSYG), 61–100 (GHSH…TTRR), 103–142 (GHTK…KYTI), 147–188 (GHKE…LRNS), 191–230 (GHSG…KLYS), 232–270 (EAGS…VVED), and 290–326 (NQKK…IGRY).

Belongs to the WD repeat G protein beta family. Ribosomal protein RACK1 subfamily. As to quaternary structure, homodimer and heterodimer with RACK1A or RACK1B. Interacts with GB1, MEKK1, MKK4, MKK5, MPK3 and MPK6, but not with GPA1 or MPK4. Widely expressed.

In terms of biological role, minor component of the RACK1 regulatory proteins that play a role in multiple signal transduction pathways. Involved in multiple hormone responses and developmental processes. MAPK cascade scaffolding protein involved in the protease IV and ArgC signaling pathway but not the flg22 pathway. This is Small ribosomal subunit protein RACK1x from Arabidopsis thaliana (Mouse-ear cress).